The following is a 596-amino-acid chain: Transcription factor IIIB 70 kDa subunit (596 aa).

The TFIIB-type zinc-finger motif lies at 1-33; the sequence is MPVCKNCHGTEFERDLSNANNDLVCKACGVVSE. Positions 4, 7, 25, and 28 each coordinate Zn(2+). 2 consecutive repeat copies span residues 90–166 and 185–264. Disordered regions lie at residues 363 to 421 and 509 to 534; these read GENI…NESG and IATGNTSVKKKRTRRRNNTRSDEPTK. Basic and acidic residues predominate over residues 365–375; sequence NIYHEGSENET. Phosphoserine occurs at positions 381 and 384. Residues 388 to 421 are compositionally biased toward basic and acidic residues; the sequence is EHVEGEDKETEGTEEKVKKVKTKTSEEKKENESG. Over residues 516-526 the composition is skewed to basic residues; sequence VKKKRTRRRNN.

This sequence belongs to the TFIIB family. As to quaternary structure, TFIIIB comprises the TATA-binding protein (TBP), the B-related factor (BRF) and the B' component (TFC5).

The protein localises to the nucleus. Its function is as follows. General activator of RNA polymerase III transcription. Interacts with TBP. Binds to Pol III subunit C34 and to the TAU135 component of TFIIIC. In Saccharomyces cerevisiae (strain ATCC 204508 / S288c) (Baker's yeast), this protein is Transcription factor IIIB 70 kDa subunit (BRF1).